The sequence spans 307 residues: MDDKMNYYPISREEWHGFYHDGKAPLTEAELDNIKSVNDQISLKDVQEIYVPLTHLIHLYMKEFESLTLSKGLFLHEYVSVPPFIIGIAGSVAVGKSTTARLLQRILARTFKRRNVQLITTDGFLYPNKVLEEQGIMDRKGFPESYDMEKLINFLNEVKSGKDEIKAPVYSHSVYDVIEGEYELIQQPDILIVEGINTLQLPANQQIYVSDFFDFSIFVDADPALIEKWYLERFGALLDTAFLDPNNYYYQYAIGKREDAFAMARNVWKTVNLPNLEEYILPTRGRADIILHKTENHLIDQIYLRKY.

Position 90 to 97 (90 to 97 (GSVAVGKS)) interacts with ATP.

This sequence belongs to the prokaryotic pantothenate kinase family.

Its subcellular location is the cytoplasm. The enzyme catalyses (R)-pantothenate + ATP = (R)-4'-phosphopantothenate + ADP + H(+). It functions in the pathway cofactor biosynthesis; coenzyme A biosynthesis; CoA from (R)-pantothenate: step 1/5. In Enterococcus faecalis (strain ATCC 700802 / V583), this protein is Pantothenate kinase.